Here is a 215-residue protein sequence, read N- to C-terminus: uncharacterized protein (215 aa).

Residues 98–119 (AAALAVAVASLCVCTLLLTHIV) form a helical membrane-spanning segment.

It is found in the membrane. This is an uncharacterized protein from Treponema pallidum (strain Nichols).